Here is a 306-residue protein sequence, read N- to C-terminus: Pyridoxal 5'-phosphate synthase subunit PdxS (306 aa).

D-ribose 5-phosphate is bound at residue aspartate 36. The active-site Schiff-base intermediate with D-ribose 5-phosphate is lysine 93. Glycine 165 lines the D-ribose 5-phosphate pocket. Arginine 177 serves as a coordination point for D-glyceraldehyde 3-phosphate. D-ribose 5-phosphate contacts are provided by residues glycine 226 and 247 to 248 (GS).

It belongs to the PdxS/SNZ family. As to quaternary structure, in the presence of PdxT, forms a dodecamer of heterodimers.

It carries out the reaction aldehydo-D-ribose 5-phosphate + D-glyceraldehyde 3-phosphate + L-glutamine = pyridoxal 5'-phosphate + L-glutamate + phosphate + 3 H2O + H(+). Its pathway is cofactor biosynthesis; pyridoxal 5'-phosphate biosynthesis. Its function is as follows. Catalyzes the formation of pyridoxal 5'-phosphate from ribose 5-phosphate (RBP), glyceraldehyde 3-phosphate (G3P) and ammonia. The ammonia is provided by the PdxT subunit. Can also use ribulose 5-phosphate and dihydroxyacetone phosphate as substrates, resulting from enzyme-catalyzed isomerization of RBP and G3P, respectively. This chain is Pyridoxal 5'-phosphate synthase subunit PdxS, found in Corynebacterium urealyticum (strain ATCC 43042 / DSM 7109).